A 451-amino-acid polypeptide reads, in one-letter code: Zinc finger MYND domain-containing protein 10 homolog (451 aa).

Cys-412, Cys-415, Cys-423, Cys-426, Cys-432, Cys-436, His-444, and Cys-448 together coordinate Zn(2+). An MYND-type zinc finger spans residues 412–448; the sequence is CATCQAKAKKKCACCKKVHYCSRDCQLKDWPQHKLVC.

This sequence belongs to the ZMYND10 family. Specifically expressed in cells with flagella and motile cilia: chordotonal sensory neurons and sperm.

The protein resides in the cytoplasm. The protein localises to the cell projection. Its subcellular location is the cilium. It localises to the dynein axonemal particle. In terms of biological role, plays a role in axonemal structure organization and motility. May be involved in axonemal pre-assembly of inner and outer dynein arms (IDA and ODA, respectively) for proper axoneme building for cilia motility. The protein is Zinc finger MYND domain-containing protein 10 homolog of Drosophila melanogaster (Fruit fly).